Here is a 255-residue protein sequence, read N- to C-terminus: 5'-nucleotidase SurE (255 aa).

4 residues coordinate a divalent metal cation: aspartate 8, aspartate 9, serine 40, and asparagine 93.

The protein belongs to the SurE nucleotidase family. A divalent metal cation is required as a cofactor.

The protein resides in the cytoplasm. The catalysed reaction is a ribonucleoside 5'-phosphate + H2O = a ribonucleoside + phosphate. Functionally, nucleotidase that shows phosphatase activity on nucleoside 5'-monophosphates. The polypeptide is 5'-nucleotidase SurE (Rhodopseudomonas palustris (strain BisA53)).